Consider the following 129-residue polypeptide: 3-aminoacrylate deaminase RutC (129 aa).

Belongs to the RutC family.

It catalyses the reaction (Z)-3-aminoacrylate + H2O + H(+) = 3-oxopropanoate + NH4(+). In terms of biological role, involved in pyrimidine catabolism. Catalyzes the deamination of 3-aminoacrylate to malonic semialdehyde, a reaction that can also occur spontaneously. RutC may facilitate the reaction and modulate the metabolic fitness, rather than catalyzing essential functions. This Caulobacter sp. (strain K31) protein is 3-aminoacrylate deaminase RutC.